The primary structure comprises 447 residues: Glycylpeptide N-tetradecanoyltransferase (447 aa).

Residues 38 to 41, 171 to 173, and 179 to 183 contribute to the tetradecanoyl-CoA site; these read YKFW, LCV, and SKRLA. Leu-447 acts as the Proton acceptor; via carboxylate in catalysis.

The protein belongs to the NMT family. Monomer.

Its subcellular location is the cytoplasm. It catalyses the reaction N-terminal glycyl-[protein] + tetradecanoyl-CoA = N-tetradecanoylglycyl-[protein] + CoA + H(+). In terms of biological role, adds a myristoyl group to the N-terminal glycine residue of certain cellular proteins. The chain is Glycylpeptide N-tetradecanoyltransferase (NMT1) from Kluyveromyces lactis (strain ATCC 8585 / CBS 2359 / DSM 70799 / NBRC 1267 / NRRL Y-1140 / WM37) (Yeast).